The chain runs to 1007 residues: Beta-galactosidase A (1007 aa).

The signal sequence occupies residues 1-18; the sequence is MKLSSACAIALLAAQAAG. Substrate is bound by residues Tyr-96 and 140-142; that span reads NAE. N-linked (GlcNAc...) asparagine glycosylation occurs at Asn-156. Asn-199 is a substrate binding site. Catalysis depends on Glu-200, which acts as the Proton donor. Disulfide bonds link Cys-205-Cys-206 and Cys-266-Cys-315. Residue Glu-298 is the Nucleophile of the active site. Tyr-364 serves as a coordination point for substrate. 10 N-linked (GlcNAc...) asparagine glycosylation sites follow: Asn-402, Asn-422, Asn-478, Asn-522, Asn-622, Asn-739, Asn-760, Asn-777, Asn-805, and Asn-914.

This sequence belongs to the glycosyl hydrolase 35 family.

It is found in the secreted. The catalysed reaction is Hydrolysis of terminal non-reducing beta-D-galactose residues in beta-D-galactosides.. In terms of biological role, cleaves beta-linked terminal galactosyl residues from gangliosides, glycoproteins, and glycosaminoglycans. This is Beta-galactosidase A (lacA) from Aspergillus niger (strain ATCC MYA-4892 / CBS 513.88 / FGSC A1513).